The primary structure comprises 456 residues: Putative gluconeogenesis factor (456 aa).

It belongs to the gluconeogenesis factor family.

The protein resides in the cytoplasm. In terms of biological role, required for morphogenesis under gluconeogenic growth conditions. The chain is Putative gluconeogenesis factor from Nostoc sp. (strain PCC 7120 / SAG 25.82 / UTEX 2576).